The following is a 161-amino-acid chain: Small ribosomal subunit protein uS9 (161 aa).

This sequence belongs to the universal ribosomal protein uS9 family.

This Rickettsia prowazekii (strain Madrid E) protein is Small ribosomal subunit protein uS9 (rpsI).